We begin with the raw amino-acid sequence, 142 residues long: Transcriptional regulator MraZ (142 aa).

SpoVT-AbrB domains lie at 5–47 (EYNH…PLGE) and 76–119 (ANEV…SKEK).

This sequence belongs to the MraZ family. In terms of assembly, forms oligomers.

It is found in the cytoplasm. The protein resides in the nucleoid. In Clostridium acetobutylicum (strain ATCC 824 / DSM 792 / JCM 1419 / IAM 19013 / LMG 5710 / NBRC 13948 / NRRL B-527 / VKM B-1787 / 2291 / W), this protein is Transcriptional regulator MraZ.